The chain runs to 177 residues: MPDSTRVATVYPPGYETWGEKFQRKFKENPWVPLGCLATCGALLMSAVKMRQGRSKEMNYWMRARVGLQGLTLVALVAGSMALKAAKEKAELEAANAPELTQEQIRQLEKEKEEFEMRLKEAEYSHAQEMALAAGANVRKAKTAEAAQKSAAVGVEVDTENRPSTPAPSGKSWWKMW.

The region spanning Asp3–Ala94 is the HIG1 domain. A run of 2 helical transmembrane segments spans residues Trp31–Val48 and Trp61–Leu83. Positions Leu83 to Glu129 form a coiled coil. The segment at Ser150–Trp177 is disordered.

This sequence belongs to the RCF1 family. Associates with the respiratory chain complex III/complex IV supercomplex.

The protein resides in the mitochondrion membrane. Its function is as follows. Cytochrome c oxidase subunit which plays a role in assembly of respiratory supercomplexes. In Coprinopsis cinerea (strain Okayama-7 / 130 / ATCC MYA-4618 / FGSC 9003) (Inky cap fungus), this protein is Respiratory supercomplex factor 1, mitochondrial (RCF1).